The following is a 616-amino-acid chain: Dihydroxy-acid dehydratase (616 aa).

D81 provides a ligand contact to Mg(2+). C122 is a binding site for [2Fe-2S] cluster. Residues D123 and K124 each contribute to the Mg(2+) site. K124 carries the post-translational modification N6-carboxylysine. C195 provides a ligand contact to [2Fe-2S] cluster. A Mg(2+)-binding site is contributed by E491. Residue S517 is the Proton acceptor of the active site.

Belongs to the IlvD/Edd family. As to quaternary structure, homodimer. It depends on [2Fe-2S] cluster as a cofactor. Requires Mg(2+) as cofactor.

The catalysed reaction is (2R)-2,3-dihydroxy-3-methylbutanoate = 3-methyl-2-oxobutanoate + H2O. The enzyme catalyses (2R,3R)-2,3-dihydroxy-3-methylpentanoate = (S)-3-methyl-2-oxopentanoate + H2O. Its pathway is amino-acid biosynthesis; L-isoleucine biosynthesis; L-isoleucine from 2-oxobutanoate: step 3/4. It functions in the pathway amino-acid biosynthesis; L-valine biosynthesis; L-valine from pyruvate: step 3/4. Its function is as follows. Functions in the biosynthesis of branched-chain amino acids. Catalyzes the dehydration of (2R,3R)-2,3-dihydroxy-3-methylpentanoate (2,3-dihydroxy-3-methylvalerate) into 2-oxo-3-methylpentanoate (2-oxo-3-methylvalerate) and of (2R)-2,3-dihydroxy-3-methylbutanoate (2,3-dihydroxyisovalerate) into 2-oxo-3-methylbutanoate (2-oxoisovalerate), the penultimate precursor to L-isoleucine and L-valine, respectively. This is Dihydroxy-acid dehydratase from Escherichia coli (strain 55989 / EAEC).